We begin with the raw amino-acid sequence, 38 residues long: Lebetin-2-alpha (38 aa).

Positions 1 to 38 (GDNKPPKKGPPNGCFGHKIDRIGSHSGLGCNKVDDNKG) are disordered. A disulfide bridge connects residues Cys-14 and Cys-30.

The protein belongs to the natriuretic peptide family. As to expression, expressed by the venom gland.

The protein resides in the secreted. In terms of biological role, inhibits platelet aggregation induced by thrombin, collagen and PAF-acether. Human platelet aggregation induced by thrombin is inhibited by synthetic lebetin-1-alpha with (IC(50)=140 nM). In vivo, inhibits collagen-induced thrombocytopenia in rats. Is not toxic upon intravenous injection into mice and rats. Inhibits platelet aggregation induced by thrombin, collagen and PAF-acether. Human platelet aggregation induced by thrombin is inhibited by synthetic lebetin-1-beta with (IC(50)=32 nM). In vivo, inhibits collagen-induced thrombocytopenia in rats. Is not toxic upon intravenous injection into mice and rats. Its function is as follows. Inhibits platelet aggregation induced by thrombin, collagen and PAF-acether. Human platelet aggregation induced by thrombin is inhibited by synthetic lebetin-1-gamma with (IC(50)=5 nM). In vivo, inhibits collagen-induced thrombocytopenia in rats. Is not toxic upon intravenous injection into mice and rats. Functionally, inhibits platelet aggregation induced by thrombin, collagen and PAF-acether. Human platelet aggregation induced by thrombin is inhibited by synthetic lebetin-1-alpha with (IC(50)=2.5 nM). In vivo, inhibits collagen-induced thrombocytopenia in rats. Is not toxic upon intravenous injection into mice and rats. In terms of biological role, inhibits platelet aggregation induced by thrombin, collagen and PAF-acether. Human platelet aggregation induced by thrombin is inhibited by synthetic lebetin-1-alpha with (IC(50)=2.8 nM). In vivo, inhibits collagen-induced thrombocytopenia in rats. Is not toxic upon intravenous injection into mice and rats. The chain is Lebetin-2-alpha from Macrovipera lebetinus (Levantine viper).